Reading from the N-terminus, the 184-residue chain is MTTPQIDERAMEAGAAALQETIVDPGPLDVTALAVAAALAAGLHSAADDPAAALDKCIVLDELTEFAEKLVVHDRPGGIGTTVEYVEVYEDASGVRLGTATGNAVVLKMEPHMWQFHQSVSELADGSFEAVGVIDCTAMLRRMTQVLRVTGRSGRYAGKSGFMTLAISDPNQRPPHYSVQVVLC.

Cys57 and Cys184 are oxidised to a cystine. Gln115 is a binding site for (1S,3R,6R,8R,9R,11R,14S,15S,19R,20R)-8-ethyl-9,15-dihydroxy-3,4,6,20-tetramethyl-21,23-dioxo-24-azapentacyclo[20.2.1.0(1,6).0(11,20).0(14,19)]pentacosa-4,12,22(25)-trien-25-olate.

As to quaternary structure, homodimer.

The enzyme catalyses 4-[(1R,2R,4aS,5S,8aR)-2-[(2R,3R,5E,7E)-3-ethyl-2-hydroxy-5,7-dimethylnona-5,7-dien-1-yl]-5-hydroxy-1-methyl-1,2,4a,5,6,7,8,8a-octahydronaphthalene-1-carbonyl]-2-methylidene-5-oxo-2,5-dihydro-1H-pyrrol-3-olate = (1S,3R,6R,8R,9R,11R,14S,15S,19R,20R)-8-ethyl-9,15-dihydroxy-3,4,6,20-tetramethyl-21,23-dioxo-24-azapentacyclo[20.2.1.0(1,6).0(11,20).0(14,19)]pentacosa-4,12,22(25)-trien-25-olate. The protein operates within antibiotic biosynthesis. In terms of biological role, involved in the biosynthesis of the spirotetramate antibiotics pyrroindomycins. Catalyzes the intramolecular cyclization forming the spiro-conjugate moiety in pyrroindomycins, via an exo-selective [4+2] cycloaddition reaction. In Streptomyces rugosporus, this protein is Spiro-conjugate synthase.